The sequence spans 160 residues: MSFNHFDDQGRAIMVDVSGKQPTLRTATAAATVAMKPETLADLLAGRTTKGDVLGVARLAGIAAAKKTPELIPLSHPLAIHHAAVDFETEPETGTITVKATVRAFERTGVEMEAMTSAAVAALTIYDMCKGADKGITIGDICLLFKEGGKSGTWQREEPA.

Substrate is bound by residues 74–76 (LSH) and 112–113 (ME). The active site involves Asp127.

The protein belongs to the MoaC family. As to quaternary structure, homohexamer; trimer of dimers.

The catalysed reaction is (8S)-3',8-cyclo-7,8-dihydroguanosine 5'-triphosphate = cyclic pyranopterin phosphate + diphosphate. It functions in the pathway cofactor biosynthesis; molybdopterin biosynthesis. Functionally, catalyzes the conversion of (8S)-3',8-cyclo-7,8-dihydroguanosine 5'-triphosphate to cyclic pyranopterin monophosphate (cPMP). The polypeptide is Cyclic pyranopterin monophosphate synthase (Geobacter metallireducens (strain ATCC 53774 / DSM 7210 / GS-15)).